The chain runs to 626 residues: MQSSAKKVALPAMTLAALGVVFGDIGTSPLYAFAQTFTSAHVNISEATVFGILSLIFWCITLSISFKYVSIVMRADNNGEGGIMSLLALLLRIKQLDSNKKIYLIALGFVGASLFFGDGIITPAISVLSAIEGLSIATPAFDRWLIPIGLGILTALFMVQRHGTATMGKFFGPITMLWFISIGALGLYSIIQTPHILWFINPIWAIEFAIHQPFVAFVAMGSVVLTMTGGEALYADMGHFGRMPIRLAWFIVVCPSLMLNYAGQGALLLRDPQAVSNPFYLLVPEWALFPMIGLATAAAVIASQAVITGVFSMVNQAIQLRYLPRLTVIHTSDVEQGQIYVPFINWVLYISVFFLIILFESSSNLASAYGVAVTMTMLCVTILISVLAYGAWGWPWWKVTLFAVPFLALDGIFVASTSLKILSGGWVPFVIGVVVFTILMTWKRGREIVFNRLETDALPISLFIKSIGSSAETHFVPGDAVFLTGNPNIVPHAMLHNIKHNKVLHSRNIMVTVYTEDIPYVAKEQRVQLEKMDEHFYRISMYYGFKDQPNIPQALEQAYQALDLEFDMMQISFFISRDRLIHTVGDGMSPWREKLFISMQRNTSPVSDFYQIPPNRVVEMGSQIEI.

The next 13 membrane-spanning stretches (helical) occupy residues 8–28 (VALP…IGTS), 44–64 (ISEA…TLSI), 102–122 (IYLI…GIIT), 139–159 (PAFD…LFMV), 171–191 (FGPI…YSII), 196–216 (ILWF…PFVA), 217–237 (FVAM…YADM), 249–269 (WFIV…ALLL), 281–301 (LLVP…AAVI), 339–359 (IYVP…IILF), 377–397 (MLCV…WPWW), 399–419 (VTLF…STSL), and 421–441 (ILSG…ILMT).

It belongs to the HAK/KUP transporter (TC 2.A.72) family.

Its subcellular location is the cell inner membrane. The enzyme catalyses K(+)(in) + H(+)(in) = K(+)(out) + H(+)(out). Functionally, transport of potassium into the cell. Likely operates as a K(+):H(+) symporter. The protein is Probable potassium transport system protein Kup of Acinetobacter baylyi (strain ATCC 33305 / BD413 / ADP1).